The sequence spans 327 residues: Ribosomal RNA small subunit methyltransferase H (327 aa).

S-adenosyl-L-methionine is bound by residues 42–44 (GGH), D61, L95, D109, and Q116.

The protein belongs to the methyltransferase superfamily. RsmH family.

Its subcellular location is the cytoplasm. It carries out the reaction cytidine(1402) in 16S rRNA + S-adenosyl-L-methionine = N(4)-methylcytidine(1402) in 16S rRNA + S-adenosyl-L-homocysteine + H(+). In terms of biological role, specifically methylates the N4 position of cytidine in position 1402 (C1402) of 16S rRNA. In Desulfovibrio desulfuricans (strain ATCC 27774 / DSM 6949 / MB), this protein is Ribosomal RNA small subunit methyltransferase H.